The sequence spans 344 residues: Dihydroorotase (344 aa).

H13 and H15 together coordinate Zn(2+). Residues 15-17 and N41 each bind substrate; that span reads HLR. Zn(2+)-binding residues include K99, H136, and H174. Position 99 is an N6-carboxylysine (K99). Position 136 (H136) interacts with substrate. L219 is a substrate binding site. D247 contributes to the Zn(2+) binding site. The active site involves D247. Substrate is bound by residues H251 and A263.

The protein belongs to the metallo-dependent hydrolases superfamily. DHOase family. Class II DHOase subfamily. In terms of assembly, homodimer. Requires Zn(2+) as cofactor.

The catalysed reaction is (S)-dihydroorotate + H2O = N-carbamoyl-L-aspartate + H(+). Its pathway is pyrimidine metabolism; UMP biosynthesis via de novo pathway; (S)-dihydroorotate from bicarbonate: step 3/3. Catalyzes the reversible cyclization of carbamoyl aspartate to dihydroorotate. The protein is Dihydroorotase of Acinetobacter baylyi (strain ATCC 33305 / BD413 / ADP1).